We begin with the raw amino-acid sequence, 173 residues long: Lipoprotein signal peptidase (173 aa).

3 helical membrane passes run 12–32 (WLWL…WTIQ), 67–87 (WQRY…VYLL), and 102–122 (ALIL…GYVI). Active-site residues include D123 and D141. The chain crosses the membrane as a helical span at residues 137–157 (FNIADSAIFTGAVIMIFESFF).

This sequence belongs to the peptidase A8 family.

The protein resides in the cell inner membrane. It catalyses the reaction Release of signal peptides from bacterial membrane prolipoproteins. Hydrolyzes -Xaa-Yaa-Zaa-|-(S,diacylglyceryl)Cys-, in which Xaa is hydrophobic (preferably Leu), and Yaa (Ala or Ser) and Zaa (Gly or Ala) have small, neutral side chains.. It functions in the pathway protein modification; lipoprotein biosynthesis (signal peptide cleavage). In terms of biological role, this protein specifically catalyzes the removal of signal peptides from prolipoproteins. In Psychromonas ingrahamii (strain DSM 17664 / CCUG 51855 / 37), this protein is Lipoprotein signal peptidase.